Consider the following 301-residue polypeptide: Large ribosomal subunit protein uL18 (301 aa).

A compositionally biased stretch (basic and acidic residues) spans 257–271 (NPERVKSTKKNDKPK). The disordered stretch occupies residues 257–283 (NPERVKSTKKNDKPKRDHKKFYPTKLT).

It belongs to the universal ribosomal protein uL18 family. In terms of assembly, component of the large ribosomal subunit (LSU).

The protein localises to the cytoplasm. The protein resides in the nucleus. Component of the ribosome, a large ribonucleoprotein complex responsible for the synthesis of proteins in the cell. The small ribosomal subunit (SSU) binds messenger RNAs (mRNAs) and translates the encoded message by selecting cognate aminoacyl-transfer RNA (tRNA) molecules. The large subunit (LSU) contains the ribosomal catalytic site termed the peptidyl transferase center (PTC), which catalyzes the formation of peptide bonds, thereby polymerizing the amino acids delivered by tRNAs into a polypeptide chain. The nascent polypeptides leave the ribosome through a tunnel in the LSU and interact with protein factors that function in enzymatic processing, targeting, and the membrane insertion of nascent chains at the exit of the ribosomal tunnel. The chain is Large ribosomal subunit protein uL18 (RPL5) from Tetrahymena thermophila (strain SB210).